The sequence spans 329 residues: MTKIYDAANWSKHEDDFTQMFYNQNVKQFWLPEEIALNGDLLTWKYLGKNEQDTYMKVLAGLTLLDTEQGNTGMPIVAEHVDGHQRKAVLNFMAMMENAVHAKSYSNIFLTLAPTEQINEVFEWVKNNRFLQKKARTIVSVYKTIKKNDEISLFKGMVASVFLESFLFYSGFYYPLYFYGQGKLMQSGEIINLIIRDEAIHGVYVGLLAQEIYKKQTPQKQKELYAWALNLLQELYENELEYTEDVYDQVGLAPDVKKFIRYNANKALNNLGFDHWFEEEDVNPIVINGLNTKTKSHDFFSTKGNGYKKATVEPLKDSDFIFTEKGCIQ.

Residues D66, E97, and H101 each contribute to the Fe cation site. The active site involves Y105. Fe cation contacts are provided by E164, E198, and H201.

The protein belongs to the ribonucleoside diphosphate reductase small chain family. In terms of assembly, tetramer of two alpha and two beta subunits. Fe cation serves as cofactor.

The catalysed reaction is a 2'-deoxyribonucleoside 5'-diphosphate + [thioredoxin]-disulfide + H2O = a ribonucleoside 5'-diphosphate + [thioredoxin]-dithiol. Its function is as follows. Provides the precursors necessary for DNA synthesis. Catalyzes the biosynthesis of deoxyribonucleotides from the corresponding ribonucleotides. This is Ribonucleoside-diphosphate reductase subunit beta (bnrdF) from Bacillus pumilus (Bacillus mesentericus).